A 254-amino-acid polypeptide reads, in one-letter code: Triosephosphate isomerase (254 aa).

Substrate is bound at residue 12–14; sequence NWK. His-99 acts as the Electrophile in catalysis. Glu-169 acts as the Proton acceptor in catalysis. Substrate contacts are provided by residues Gly-175, Ser-214, and 235 to 236; that span reads GG.

The protein belongs to the triosephosphate isomerase family. Homodimer.

The protein localises to the cytoplasm. The enzyme catalyses D-glyceraldehyde 3-phosphate = dihydroxyacetone phosphate. The protein operates within carbohydrate biosynthesis; gluconeogenesis. Its pathway is carbohydrate degradation; glycolysis; D-glyceraldehyde 3-phosphate from glycerone phosphate: step 1/1. Involved in the gluconeogenesis. Catalyzes stereospecifically the conversion of dihydroxyacetone phosphate (DHAP) to D-glyceraldehyde-3-phosphate (G3P). The polypeptide is Triosephosphate isomerase (Xanthobacter autotrophicus (strain ATCC BAA-1158 / Py2)).